The following is a 75-amino-acid chain: uncharacterized protein (75 aa).

Positions 3 to 45 constitute a SpoVT-AbrB domain; that stretch reads TTVFLSNRSQAVRLPKAVALPENVKRVEVIAVGRTRIITPAGE.

The protein belongs to the VapB family.

This is an uncharacterized protein from Escherichia coli (strain K12).